The primary structure comprises 436 residues: GTPase Der (436 aa).

2 consecutive EngA-type G domains span residues 4-167 (PIVA…GEEE) and 176-351 (IRLS…ENHK). GTP contacts are provided by residues 10 to 17 (GRPNVGKS), 57 to 61 (DTGGI), 119 to 122 (NKVD), 182 to 189 (GRPNVGKS), 229 to 233 (DTAGM), and 294 to 297 (NKWD). A KH-like domain is found at 352–436 (KRVQSSTLNE…PIHIIARKRN (85 aa)).

Belongs to the TRAFAC class TrmE-Era-EngA-EngB-Septin-like GTPase superfamily. EngA (Der) GTPase family. Associates with the 50S ribosomal subunit.

Functionally, GTPase that plays an essential role in the late steps of ribosome biogenesis. In Staphylococcus aureus (strain Mu3 / ATCC 700698), this protein is GTPase Der.